The primary structure comprises 94 residues: MQIDEKLLSKLEKLSALQITKNRNETIVQLSEIVNFVEKLNELDLDSQEITVSTIKGGAPLRIDEIRNSNVIDEVLDCAPKKQEHFFVVPKIIE.

Belongs to the GatC family. As to quaternary structure, heterotrimer of A, B and C subunits.

It carries out the reaction L-glutamyl-tRNA(Gln) + L-glutamine + ATP + H2O = L-glutaminyl-tRNA(Gln) + L-glutamate + ADP + phosphate + H(+). The catalysed reaction is L-aspartyl-tRNA(Asn) + L-glutamine + ATP + H2O = L-asparaginyl-tRNA(Asn) + L-glutamate + ADP + phosphate + 2 H(+). Allows the formation of correctly charged Asn-tRNA(Asn) or Gln-tRNA(Gln) through the transamidation of misacylated Asp-tRNA(Asn) or Glu-tRNA(Gln) in organisms which lack either or both of asparaginyl-tRNA or glutaminyl-tRNA synthetases. The reaction takes place in the presence of glutamine and ATP through an activated phospho-Asp-tRNA(Asn) or phospho-Glu-tRNA(Gln). This is Aspartyl/glutamyl-tRNA(Asn/Gln) amidotransferase subunit C from Campylobacter jejuni subsp. jejuni serotype O:6 (strain 81116 / NCTC 11828).